The following is a 279-amino-acid chain: B3 domain-containing protein Os11g0156000 (279 aa).

Positions 38–144 (FEKPLTPSDV…DRLFIGCRRR (107 aa)) form a DNA-binding region, TF-B3. Disordered regions lie at residues 148 to 182 (AAAQ…YSTS) and 203 to 228 (HDHG…AGSA). The segment covering 159–168 (VRVAPAAQNA) has biased composition (low complexity). The segment covering 203-219 (HDHGDMHHADESPRDTD) has biased composition (basic and acidic residues).

The protein resides in the nucleus. This is B3 domain-containing protein Os11g0156000 from Oryza sativa subsp. japonica (Rice).